The chain runs to 329 residues: Serine, glycine and glutamine-rich protein (329 aa).

An N-terminal signal peptide occupies residues 1–16; sequence MKTVLLFVVLVGLAYC. Positions 38–48 are enriched in low complexity; that stretch reads SSSSSSSSSSS. Residues 38–80 form a disordered region; sequence SSSSSSSSSSSSGGGGSSGGGASGGGGGSSSGGGGASGGGGGG. Residues 49–80 show a composition bias toward gly residues; it reads SGGGGSSGGGASGGGGGSSSGGGGASGGGGGG.

In terms of tissue distribution, prismatic layer of shell (at protein level). Expressed primarily in the mantle with highest level in the mantle edge and lower level in the mantle pallium.

Its subcellular location is the secreted. The sequence is that of Serine, glycine and glutamine-rich protein from Pinctada maxima (Silver-lipped pearl oyster).